The chain runs to 773 residues: C-Maf-inducing protein (773 aa).

A disordered region spans residues 1–28 (MDVTSSSGGGDPRQIEETKPLLGSDVSG). The 110-residue stretch at 54–163 (LLQEGDIQVC…HSLQWKKKIY (110 aa)) folds into the PH domain. Phosphoserine is present on residues Ser349, Ser377, Ser382, and Ser660. LRR repeat units follow at residues 663-686 (NLEN…IKLP), 687-707 (SLKQ…RLLS), 712-732 (MLQV…LALS), and 736-756 (SLCS…EDLK).

Interacts with FLNA.

It is found in the nucleus. The protein resides in the cytoplasm. Plays a role in T-cell signaling pathway. The polypeptide is C-Maf-inducing protein (Cmip) (Mus musculus (Mouse)).